Consider the following 1394-residue polypeptide: ABC transporter patM (1394 aa).

Positions 1–41 (MVDNYHSSLDVAKTPIQSDADAQKSEAETEGPSSKSSQIAA) are disordered. The 244-residue stretch at 98–341 (SPLQNRQRKQ…FEDLGFECLS (244 aa)) folds into the ABC transporter 1 domain. 6 helical membrane-spanning segments follow: residues 437–457 (SLWAVELATIVVQSLVLGTLF), 467–487 (LFIFASALFYSVLVPALQSMA), 511–531 (IAYALGLVTTDVVWKVAAICY), 546–566 (GNFFTWFLIIYLEHLALSMFF), 579–599 (AVLPVGIFFNMYVLYTGLYVP), and 688–708 (VGINAALFVFFALCSGIGMEM). A disordered region spans residues 727 to 755 (VTHRRDKIDSETGQDQGNESSEMSAGQSN). Residues 737–755 (ETGQDQGNESSEMSAGQSN) show a composition bias toward polar residues. The 247-residue stretch at 767 to 1013 (DKSHNLAWTN…EAIQYFQPRS (247 aa)) folds into the ABC transporter 2 domain. 808–815 (GVSGAGKT) lines the ATP pocket. 6 helical membrane-spanning segments follow: residues 1131–1151 (GAYNRVFSAFMSLIVGPPLGL), 1177–1197 (LAFVLSAFIVELPFTFLSSLV), 1219–1239 (FLMYELFGVFATSLAQLCASL), 1245–1265 (AAFAANGFFFMFCNTFAGTLS), 1280–1300 (ISPLFYLGEGVTVDVLQDLPI), and 1368–1388 (IGVFICFIAFNFTMVLVMTYL).

Belongs to the ABC transporter superfamily. ABCG family. PDR (TC 3.A.1.205) subfamily.

It is found in the vacuole membrane. Its subcellular location is the cell membrane. It participates in mycotoxin biosynthesis; patulin biosynthesis. ABC transporter; part of the gene cluster that mediates the biosynthesis of patulin, an acetate-derived tetraketide mycotoxin produced by several fungal species that shows antimicrobial properties against several bacteria. May be involved in the secretion of E-ascladiol to be converted to patulin by the secreted patulin synthase patE. The protein is ABC transporter patM of Penicillium expansum (Blue mold rot fungus).